The sequence spans 657 residues: MTRLAIGKPAPLGAHYDGQGVNFTLFSAHAERVELCVFDANGQEHRYDLPGHSGDIWHGYLPDARPGLRYGYRVHGPWQPAEGHRFNPAKLLIDPCARQIDGEFKDNPLLHAGHNEPDYRDNAAIAPKCVVVVDHYDWEDDAPPRTPWGSTIIYEAHVKGLTYLHPEIPVEIRGTYKALGHPVMINYLKQLGITALELLPVAQFASEPRLQRMGLSNYWGYNPVAMFALHPAYACSPETALDEFRDAIKALHKAGIEVILDIVLNHSAELDLDGPLFSLRGIDNRSYYWIREDGDYHNWTGCGNTLNLSHPAVVDYASACLRYWVETCHVDGFRFDLAAVMGRTPEFRQDAPLFTAIQNCPVLSQVKLIAEPWDIAPGGYQVGNFPPLFAEWNDHFRDAARRFWLHYDLPLGAFAGRFAASSDVFKRNGRLPSAAINLVTAHDGFTLRDCVCFNHKHNEANGEENRDGTNNNYSNNHGKEGLGGSLDLVERRRDSIHALLTTLLLSQGTPMLLAGDEHGHSQHGNNNAYCQDNQLTWLDWSQASSGLTAFTAALIHLRKRIPALVENRWWEEGDGNVRWLNRYAQPLSTDEWQNGPKQLQILLSDRFLIAINATLEVTEIVLPAGEWHAIPPFAGEDNPVITAVWQGPAHGLCVFQR.

The Nucleophile role is filled by aspartate 336. The active-site Proton donor is the glutamate 371. Residues 458 to 467 (NEANGEENRD) are compositionally biased toward basic and acidic residues. The tract at residues 458–479 (NEANGEENRDGTNNNYSNNHGK) is disordered.

It belongs to the glycosyl hydrolase 13 family.

The enzyme catalyses Hydrolysis of (1-&gt;6)-alpha-D-glucosidic linkages to branches with degrees of polymerization of three or four glucose residues in limit dextrin.. Its pathway is glycan degradation; glycogen degradation. In terms of biological role, removes maltotriose and maltotetraose chains that are attached by 1,6-alpha-linkage to the limit dextrin main chain, generating a debranched limit dextrin. The chain is Glycogen debranching enzyme from Escherichia coli (strain SE11).